A 455-amino-acid chain; its full sequence is UPF0053 protein MT1890 (455 aa).

Residues 2–205 (NLTDTVATIL…ARSGALDDAT (204 aa)) form the CNNM transmembrane domain. Transmembrane regions (helical) follow at residues 6 to 26 (TVATILAILALTAGTGVFVAA), 68 to 88 (LGISITTLATGYLTEPLVAEL), 106 to 126 (LITFFALVIVTSLSMVFGELV), and 148 to 168 (LFSLLLTPAIRLTNGAANWIV). CBS domains are found at residues 224 to 285 (MTPR…AHTL) and 286 to 346 (LTTV…VRDE).

The protein belongs to the UPF0053 family.

The protein resides in the cell membrane. In Mycobacterium tuberculosis (strain CDC 1551 / Oshkosh), this protein is UPF0053 protein MT1890.